We begin with the raw amino-acid sequence, 1616 residues long: MAYTQTATTSALLDTVRGNNSLVNDLAKRRLYDTAVEEFNARDRRPKVNFSKVISEEQTLIATRAYPEFQITFYNTQNAVHSLAGGLRSLELEYLMMQIPYGSLTYDIGGNFASHLFKGRAYVHCCMPNLDVRDIMRHEGQKDSIELYLSRLERGGKTVPNFQKEAFDRYAELPEDAVCHNTFQTMRHQPMQQSGRVYAIALHSIYDIPADEFGAALLRKNVHTCYAAFHFSENLLLEDSYVNLDEINACFSRDGDKLTFSFASESTLNYCHSYSNILKYVCKTYFPASNREVYMKEFLVTRVNTWFCKFSRIDTFLLYKGVAHKSVDSEQFYTAMEDAWHYKKTLAMCNSERILLEDSSSVNYWFPKMRDMVIVPLFDISLETSKRTRKEVLVSKDFVFTVLNHIRTYQAKALTYANVLSFVESIRSRVIINGVTARSEWDVDKSLLQSLSMTFYLHTKLAVLKDDLLISKFSLGSKTVCQHVWDEISLAFGNAFPSVKERLLNRKLIRVAGDALEIRVPDLYVTFHDRLVTEYKASVDMPALDIRKKMEETEVMYNALSELSVLRESDKFDVDVFSQMCQSLEVDPMTAAKVIVAVMSNESGLTLTFERPTEANVALALQDQEKASEGALVVTSREVEEPSMKGSMARGELQLAGLAGDHPESSYSRNEEIESLEQFHMATADSLIRKQMSSIVYTGPIKVQQMKNFIDSLVASLSAAVSNLVKILKDTAAIDLETRQKFGVLDVASRKWLIKPTAKSHAWGVVETHARKYHVALLEYDEQGVVTCDNWRRVAVSSESVVYSDMAKLRTLRRLLRNGEPHVSSAKVVLVDGVPGCGKTKEILSRVNFDEDLILVPGKQAAEMIRRRANSSGIIVATKDNVKTVDSFMMNFGKSTRCQFKRLFIDEGLMLHTGCVNFLVTMSLCEIAYVYGDTQQIPYINRVSGFPYPAHFAKLEVDEVETRRTTLRCPADVTHYLNRRYEGFVMSTSSVKKSVSQEMVGGAAVINPISKPLHGKILTFTQSDKEALLSRGYSDVHTVHEVQGETYSDVSLVRLTPTPVSIIAGDSPHVLVALSRHTCSLKYYTVVMDPLVSIIRDLEKLSSYLLDMYKVDAGTQXQLQIDSVFKGSNLFVATPKTGDISDMQFYYDKCLPGNSTMMNNFDAVTMRLTDISLNVKDCILDMSKSVAAPKDQIKPLIPMVRTAAEMPRQTGLLENLVAMIKRNFNAPELSGIIDIENTASLVVDKFFDSYLLKEKRKPNKNVSLFSRESLNRWLEKQEQVTIGQLADFDFVDLPAVDQYRHMIKAQPKQKLDTSIQTEYPALQTIVYHSKKINAIFGPLFSELTRQLLDSVDSSRFLFFTRKTPAQIEDFFGDLDSHVPMDVLELDISKYDKSQNEFHCAVEYEIWRRLGFEDFLGEVWKQGHRKTTLKDYTAGIKTCIWYQRKSGDVTTFIGNTVIIAACLASMLPMEKIIKGAFCGDDSLLYFPKGCEFPDVQHSANLMWNFEAKLFKKQYGYFCGRYVIHHDRGCIVYYDPLKLISKLGAKHIKDWEHLEEFRRSLCDVAVSLNNCAYYTQLDDAVWEVHKTAPPGSFVYKSLVKYLSDKVLFRSLFIDGSSC.

Residues 50–458 form a methyltransferase region; sequence FSKVISEEQT…QSLSMTFYLH (409 aa). The Alphavirus-like MT domain occupies 72–281; sequence TFYNTQNAVH…HSYSNILKYV (210 aa). The 163-residue stretch at 801 to 963 folds into the (+)RNA virus helicase ATP-binding domain; that stretch reads VVYSDMAKLR…KLEVDEVETR (163 aa). Positions 830–1085 are helicase; the sequence is LVDGVPGCGK…RHTCSLKYYT (256 aa). 833–840 contributes to the ATP binding site; it reads GVPGCGKT. Residues 964–1116 form the (+)RNA virus helicase C-terminal domain; it reads RTTLRCPADV…DMYKVDAGTQ (153 aa). Positions 1380–1493 constitute a RdRp catalytic domain; the sequence is MDVLELDISK…YFPKGCEFPD (114 aa).

Belongs to the ssRNA positive-strand viruses RNA-directed RNA polymerase family. Heterodimer of a large and a small subunit.

The enzyme catalyses RNA(n) + a ribonucleoside 5'-triphosphate = RNA(n+1) + diphosphate. The catalysed reaction is ATP + H2O = ADP + phosphate + H(+). In terms of biological role, is an RNA-dependent RNA polymerase active in viral RNA replication. Functionally, is a methyltransferase active in RNA capping and an RNA helicase. Methyltransferase displays a cytoplasmic capping enzyme activity. This function is necessary since all viral RNAs are synthesized in the cytoplasm, and host capping enzymes are restricted to the nucleus. Helicase region probably exhibits NTPase and RNA unwinding activities (Potential). It also acts as a suppressor of RNA-mediated gene silencing, also known as post-transcriptional gene silencing (PTGS), a mechanism of plant viral defense that limits the accumulation of viral RNAs. May mediate silencing suppression through either inhibition of HEN1-mediated siRNA or siRNA demethylation. This is Replicase large subunit from Nicotiana tabacum (Common tobacco).